The primary structure comprises 325 residues: Melanocortin receptor 5 (325 aa).

Over 1–37 (MNSSSTLTVLNLTLNASEDGILGSNVKNKSLACEEMG) the chain is Extracellular. N-linked (GlcNAc...) asparagine glycans are attached at residues Asn2, Asn11, Asn15, and Asn28. A helical membrane pass occupies residues 38 to 61 (IAVEVFLTLGLVSLLENILVIGAI). Residues 62–73 (VKNKNLHSPMYF) are Cytoplasmic-facing. A helical membrane pass occupies residues 74-97 (FVGSLAVADMLVSMSNAWETVTIY). Residues 98–114 (LLNNKHLVIADTFVRHI) are Extracellular-facing. Residues 115-138 (DNVFDSMICISVVASMCSLLAIAV) traverse the membrane as a helical segment. Residues 139 to 155 (DRYITIFYALRYHHIMT) are Cytoplasmic-facing. Residues 156-179 (ARRSGVIIACIWTFCISCGIVFII) traverse the membrane as a helical segment. Over 180–186 (YYESKYV) the chain is Extracellular. A helical membrane pass occupies residues 187–211 (IICLISMFFTMLFFMVSLYIHMFLL). At 212–239 (ARNHVKRIAASPRYNSVRQRTSMKGAIT) the chain is on the cytoplasmic side. A helical membrane pass occupies residues 240-265 (LTMLLGIFIVCWSPFFLHLILMISCP). The Extracellular segment spans residues 266-273 (QNVYCSCF). The chain crosses the membrane as a helical span at residues 274 to 297 (MSYFNMYLILIMCNSVIDPLIYAL). Residues 298-325 (RSQEMRRTFKEIVCCHGFRRPCRLLGGY) lie on the Cytoplasmic side of the membrane. Residues Cys311 and Cys312 are each lipidated (S-palmitoyl cysteine).

This sequence belongs to the G-protein coupled receptor 1 family. As to expression, skin, adrenal gland, skeletal muscle, bone marrow, spleen, thymus, gonads, uterus and brain.

The protein localises to the cell membrane. Functionally, receptor for MSH (alpha, beta and gamma) and ACTH. The activity of this receptor is mediated by G proteins which activate adenylate cyclase. This receptor is a possible mediator of the immunomodulation properties of melanocortins. This is Melanocortin receptor 5 (Mc5r) from Mus musculus (Mouse).